The following is a 215-amino-acid chain: Na(+)-translocating NADH-quinone reductase subunit D (215 aa).

6 helical membrane passes run 14-34 (PFISNNPIMLQVLGICSALAV), 42-62 (FVMALAVTVVTGFSNLFISLI), 72-92 (IIVQMTIIASLVIVVDQLLKA), 103-123 (VFVGLIITNCIVMGRAEAYAM), 131-151 (FLDGIGNGLGYGFILLLVGTI), and 178-198 (NGMLLMPPSAFFLIGLFIWVL).

It belongs to the NqrDE/RnfAE family. In terms of assembly, composed of six subunits; NqrA, NqrB, NqrC, NqrD, NqrE and NqrF.

The protein resides in the cell inner membrane. It carries out the reaction a ubiquinone + n Na(+)(in) + NADH + H(+) = a ubiquinol + n Na(+)(out) + NAD(+). In terms of biological role, NQR complex catalyzes the reduction of ubiquinone-1 to ubiquinol by two successive reactions, coupled with the transport of Na(+) ions from the cytoplasm to the periplasm. NqrA to NqrE are probably involved in the second step, the conversion of ubisemiquinone to ubiquinol. The chain is Na(+)-translocating NADH-quinone reductase subunit D from Tolumonas auensis (strain DSM 9187 / NBRC 110442 / TA 4).